Here is a 704-residue protein sequence, read N- to C-terminus: Histone-lysine N-methyltransferase, H3 lysine-9 specific SUVH1 (704 aa).

Disordered regions lie at residues 1 to 21 (MEQG…TRVL) and 68 to 176 (PFVA…QAEG). 2 stretches are compositionally biased toward polar residues: residues 80–90 (ESSQQTPSGVP) and 109–121 (SFRT…GNSG). The segment covering 159–170 (GKKRGRPKKPRR) has biased composition (basic residues). Positions 265–412 (GNAPGIEVGD…CNVFKYKLLR (148 aa)) constitute a YDG domain. Positions 487-548 (PSCHCVGGCQ…NCRNRMSQGG (62 aa)) constitute a Pre-SET domain. Zn(2+)-binding residues include Cys489, Cys491, Cys495, Cys502, Cys504, Cys530, Cys534, Cys536, and Cys540. Residues 551–681 (ARLEVFKTKN…PMQELTFDYG (131 aa)) enclose the SET domain. Residues 561–563 (RGW), Asp593, Tyr595, Arg635, and 638–639 (NH) each bind S-adenosyl-L-methionine. Zn(2+) is bound by residues Cys641, Cys692, Cys694, and Cys699. The Post-SET domain maps to 688-704 (RRKKCLCGSLNCRGYFY).

Belongs to the class V-like SAM-binding methyltransferase superfamily. Histone-lysine methyltransferase family. Suvar3-9 subfamily. As to quaternary structure, interacts with LHP1. As to expression, expressed in roots, stems, leaves and flowers.

It localises to the nucleus. The protein localises to the chromosome. It carries out the reaction N(6)-methyl-L-lysyl(27)-[histone H3] + S-adenosyl-L-methionine = N(6),N(6)-dimethyl-L-lysyl(27)-[histone H3] + S-adenosyl-L-homocysteine + H(+). The enzyme catalyses L-lysyl(9)-[histone H3] + 2 S-adenosyl-L-methionine = N(6),N(6)-dimethyl-L-lysyl(9)-[histone H3] + 2 S-adenosyl-L-homocysteine + 2 H(+). The catalysed reaction is L-lysyl(27)-[histone H3] + S-adenosyl-L-methionine = N(6)-methyl-L-lysyl(27)-[histone H3] + S-adenosyl-L-homocysteine + H(+). Histone methyltransferase. Methylates in vitro both 'Lys-9' and 'Lys-27' of histone H3. Required for in vivo dimethylation of 'Lys-9'. H3 'Lys-9' methylation represents a specific tag for epigenetic control for plant development and transcriptional repression. The polypeptide is Histone-lysine N-methyltransferase, H3 lysine-9 specific SUVH1 (SUVH1) (Nicotiana tabacum (Common tobacco)).